The chain runs to 599 residues: Elongation factor 4 (599 aa).

Residues 4-186 (EHIRNFSIIA…EIVKKIPPPQ (183 aa)) enclose the tr-type G domain. GTP is bound by residues 16 to 21 (DHGKST) and 133 to 136 (NKID).

This sequence belongs to the TRAFAC class translation factor GTPase superfamily. Classic translation factor GTPase family. LepA subfamily.

It localises to the cell inner membrane. The enzyme catalyses GTP + H2O = GDP + phosphate + H(+). Its function is as follows. Required for accurate and efficient protein synthesis under certain stress conditions. May act as a fidelity factor of the translation reaction, by catalyzing a one-codon backward translocation of tRNAs on improperly translocated ribosomes. Back-translocation proceeds from a post-translocation (POST) complex to a pre-translocation (PRE) complex, thus giving elongation factor G a second chance to translocate the tRNAs correctly. Binds to ribosomes in a GTP-dependent manner. The protein is Elongation factor 4 of Geobacter sp. (strain M21).